Reading from the N-terminus, the 200-residue chain is NAD(P)H dehydrogenase (quinone) (200 aa).

Residues leucine 7–leucine 199 enclose the Flavodoxin-like domain. FMN is bound by residues serine 13–glycine 18, threonine 86–phenylalanine 88, serine 121–glycine 127, and histidine 142.

Belongs to the WrbA family. In terms of assembly, homotetramer. The cofactor is FMN.

The enzyme catalyses a quinone + NADH + H(+) = a quinol + NAD(+). It carries out the reaction a quinone + NADPH + H(+) = a quinol + NADP(+). This chain is NAD(P)H dehydrogenase (quinone), found in Deinococcus radiodurans (strain ATCC 13939 / DSM 20539 / JCM 16871 / CCUG 27074 / LMG 4051 / NBRC 15346 / NCIMB 9279 / VKM B-1422 / R1).